The sequence spans 216 residues: Snake venom metalloproteinase HT-1 (216 aa).

Positions 8 to 94 constitute a Disintegrin domain; that stretch reads PPVCGNELLE…DCPMDDFHRN (87 aa). Residues valine 10, asparagine 13, leucine 15, glutamate 17, glutamate 20, and aspartate 23 each contribute to the Ca(2+) site. 14 cysteine pairs are disulfide-bonded: cysteine 11/cysteine 40, cysteine 22/cysteine 35, cysteine 24/cysteine 30, cysteine 34/cysteine 57, cysteine 48/cysteine 54, cysteine 53/cysteine 79, cysteine 66/cysteine 86, cysteine 73/cysteine 105, cysteine 98/cysteine 110, cysteine 117/cysteine 167, cysteine 132/cysteine 178, cysteine 145/cysteine 155, cysteine 162/cysteine 204, and cysteine 198/cysteine 209. A D/ECD-tripeptide motif is present at residues 72 to 74; it reads ECD. Asparagine 175 carries an N-linked (GlcNAc...) asparagine glycan.

This sequence belongs to the venom metalloproteinase (M12B) family. P-III subfamily. P-IIIa sub-subfamily. In terms of assembly, monomer. Zn(2+) is required as a cofactor. As to expression, expressed by the venom gland.

It is found in the secreted. Functionally, zinc protease from snake venom that induces hemorrhage. The protein is Snake venom metalloproteinase HT-1 of Crotalus ruber ruber (Red diamond rattlesnake).